A 79-amino-acid polypeptide reads, in one-letter code: Protein SIP18 (79 aa).

Residues 1 to 79 form a disordered region; that stretch reads MSNMMNKFAE…DWKTYENMKK (79 aa). The segment covering 8–20 has biased composition (basic and acidic residues); it reads FAEKLQGNDDSHQ.

The polypeptide is Protein SIP18 (SIP18) (Saccharomyces cerevisiae (strain ATCC 204508 / S288c) (Baker's yeast)).